A 216-amino-acid chain; its full sequence is Large ribosomal subunit protein uL3 (216 aa).

The segment at 137-158 (GASHGAHKNHRKPGSIGGASTP) is disordered.

This sequence belongs to the universal ribosomal protein uL3 family. Part of the 50S ribosomal subunit. Forms a cluster with proteins L14 and L19.

Its function is as follows. One of the primary rRNA binding proteins, it binds directly near the 3'-end of the 23S rRNA, where it nucleates assembly of the 50S subunit. This Arthrobacter sp. (strain FB24) protein is Large ribosomal subunit protein uL3.